The chain runs to 312 residues: Malate dehydrogenase (312 aa).

NAD(+)-binding positions include 12-17 (GAGFTG) and Asp36. Residues Arg87 and Arg93 each coordinate substrate. NAD(+)-binding positions include Asn100 and 123-125 (LTN). A substrate-binding site is contributed by Asn125. Ser149 carries the post-translational modification Phosphoserine. Residue Arg156 participates in substrate binding. His180 (proton acceptor) is an active-site residue.

This sequence belongs to the LDH/MDH superfamily. MDH type 3 family. In terms of assembly, homotetramer.

The catalysed reaction is (S)-malate + NAD(+) = oxaloacetate + NADH + H(+). Functionally, catalyzes the reversible oxidation of malate to oxaloacetate. In Bacillus israeli, this protein is Malate dehydrogenase.